Here is a 350-residue protein sequence, read N- to C-terminus: C-X-C chemokine receptor type 1 (350 aa).

Residues 1-39 are Extracellular-facing; sequence MSNITDPQMWDFDDLNFTGMPPADEDYSPCMLETETLNK. Asn3 and Asn16 each carry an N-linked (GlcNAc...) asparagine glycan. The helical transmembrane segment at 40 to 66 threads the bilayer; the sequence is YVVIIAYALVFLLSLLGNSLVMLVILY. Residues 67–75 are Cytoplasmic-facing; it reads SRVGRSVTD. Residues 76 to 96 form a helical membrane-spanning segment; the sequence is VYLLNLALADLLFALTLPIWA. Topologically, residues 97–111 are extracellular; the sequence is ASKVNGWIFGTFLCK. Cys110 and Cys187 are disulfide-bonded. A helical membrane pass occupies residues 112-133; sequence VVSLLKEVNFYSGILLLACISV. Residues 134-154 lie on the Cytoplasmic side of the membrane; that stretch reads DRYLAIVHATRTLTQKRHLVK. A helical transmembrane segment spans residues 155–174; it reads FVCLGCWGLSMNLSLPFFLF. At 175–199 the chain is on the extracellular side; that stretch reads RQAYHPNNSSPVCYEVLGNDTAKWR. A helical membrane pass occupies residues 200–220; the sequence is MVLRILPHTFGFIVPLFVMLF. At 221–242 the chain is on the cytoplasmic side; that stretch reads CYGFTLRTLFKAHMGQKHRAMR. A helical membrane pass occupies residues 243–264; it reads VIFAVVLIFLLCWLPYNLVLLA. At 265-285 the chain is on the extracellular side; that stretch reads DTLMRTQVIQESCERRNNIGR. The chain crosses the membrane as a helical span at residues 286 to 308; that stretch reads ALDATEILGFLHSCLNPIIYAFI. Topologically, residues 309-350 are cytoplasmic; the sequence is GQNFRHGFLKILAMHGLVSKEFLARHRVTSYTSSSVNVSSNL.

It belongs to the G-protein coupled receptor 1 family. In terms of assembly, interacts with IL8. Interacts with GNAI2.

It is found in the cell membrane. In terms of biological role, receptor to interleukin-8, which is a powerful neutrophils chemotactic factor. Binding of IL-8 to the receptor causes activation of neutrophils. This response is mediated via a G-protein that activates a phosphatidylinositol-calcium second messenger system. This Homo sapiens (Human) protein is C-X-C chemokine receptor type 1 (CXCR1).